The sequence spans 309 residues: MRLEQLQAFLKVAELGSFQQAALQSEVTQSTISRQIQGLESALKCQLFHRGAQAKLTVAGELFLRRARKICQEWDVASEEISSLFQGKQTELCVAAIHSVCVSSLPSLLPKFCLGHPQIQLRVTALGSDRALKVLQDGLVDVAIIMSHRNLTNTKELAIKPLYEEQICILMASDHPLTTKKFITWENLGPYPQVIFKDGYRMRRLVEDEFSRREIPLNVSLELNIPEAFYGVVQGSEMIALMPQSLVTPVIDNPNFSVRYLFCPESGDRQDFRRQVSVVTTVDRLQIPPVAEFFNLVVDHYRCGALTVK.

One can recognise an HTH lysR-type domain in the interval 1–57; it reads MRLEQLQAFLKVAELGSFQQAALQSEVTQSTISRQIQGLESALKCQLFHRGAQAKLT. Positions 18-38 form a DNA-binding region, H-T-H motif; the sequence is FQQAALQSEVTQSTISRQIQG.

It belongs to the LysR transcriptional regulatory family.

Functionally, seems to regulate utilization of fixed nitrogen by controlling the expression of a certain gene(s) involved in nitrogen metabolism. The protein is Probable nitrogen assimilation transcriptional activator (ntcB) of Synechocystis sp. (strain ATCC 27184 / PCC 6803 / Kazusa).